An 89-amino-acid polypeptide reads, in one-letter code: Arminin 7591 (89 aa).

The first 18 residues, 1–18 (MRSAFAVLFLALIAITYS), serve as a signal peptide directing secretion. Residues 19–58 (KNYEDVKEEIKNEVENEILKDLEEDVNEFDDNVQEEVNDA) constitute a propeptide that is removed on maturation. At L86 the chain carries Leucine amide.

The protein belongs to the arminin family. Expressed in entodermal epithelium along the body column.

The protein localises to the secreted. It localises to the target cell membrane. Antimicrobial peptide with a broad-spectrum antimicrobial activity. Keeps its antibacterial activity under a wide range of salt concentrations that mimic physiological conditions of human blood, which is surprising, since Hydra is an obligate freshwater animal with nearly no salt tolerance. Does not affect red blood cells. The polypeptide is Arminin 7591 (Hydra vulgaris (Hydra)).